The primary structure comprises 553 residues: MIQRLWASRLLRHRKAQLLLVNLLTFGLEVCLAAGITYVPPLLLEVGVEEKFMTMVLGIGPVLGLVSVPLLGSASDQWRGRYGRRRPFIWALSLGVLLSLFLIPRAGWLAGLLYPDTRPLELALLILGVGLLDFCGQVCFTPLEALLSDLFRDPDHCRQAFSVYAFMISLGGCLGYLLPAIDWDTSVLAPYLGTQEECLFGLLTLIFLICMAATLFVTEEAVLGPPEPAEGLLVSAVSRRCCPCHVGLAFRNLGTLFPRLQQLCCRMPRTLRRLFVAELCSWMALMTFTLFYTDFVGEGLYQGVPRAEPGTEARRHYDEGIRMGSLGLFLQCAISLVFSLVMDRLVQKFGTRSVYLASVMTFPVAAAATCLSHSVVVVTASAALTGFTFSALQILPYTLASLYHREKQVFLPKYRGDAGGSSGEDSQTTSFLPGPKPGALFPNGHVGSGSSGILAPPPALCGASACDVSMRVVVGEPPEARVVTGRGICLDLAILDSAFLLSQVAPSLFMGSIVQLSHSVTAYMVSAAGLGLVAIYFATQVVFDKNDLAKYSV.

11 helical membrane-spanning segments follow: residues 19–39 (LLVN…ITYV), 52–72 (FMTM…PLLG), 88–108 (FIWA…RAGW), 120–140 (LELA…QVCF), 161–181 (FSVY…LPAI), 198–218 (CLFG…LFVT), 275–295 (FVAE…YTDF), 323–343 (MGSL…LVMD), 353–373 (SVYL…CLSH), 382–402 (AALT…LASL), and 522–542 (AYMV…TQVV).

It belongs to the glycoside-pentoside-hexuronide (GPH) cation symporter transporter (TC 2.A.2) family. As to expression, expressed in the epididymis. Primarily expressed in the prostate, but also in other tissues.

It is found in the membrane. The enzyme catalyses sucrose(out) + H(+)(out) = sucrose(in) + H(+)(in). In terms of biological role, proton-associated sucrose transporter. May be able to transport also glucose and fructose. The protein is Solute carrier family 45 member 3 (Slc45a3) of Mus musculus (Mouse).